The chain runs to 151 residues: UPAR/Ly6 domain-containing protein crok (151 aa).

A signal peptide spans 1–23 (MKTLEKYILFAIVLCCLLQLGQA). Topologically, residues 24-128 (IKCWDCRSDN…KDGCNSAGIH (105 aa)) are lumenal. Cystine bridges form between cysteine 26-cysteine 68, cysteine 29-cysteine 37, cysteine 51-cysteine 85, cysteine 100-cysteine 114, and cysteine 116-cysteine 122. Asparagine 43 carries N-linked (GlcNAc...) asparagine glycosylation. A lipid anchor (GPI-anchor amidated serine) is attached at serine 124. A propeptide spans 125–151 (AGIHRLGLMGVLTGTLLSVIVAHLLRQ) (removed in mature form). A helical membrane pass occupies residues 129–149 (RLGLMGVLTGTLLSVIVAHLL). At 150 to 151 (RQ) the chain is on the cytoplasmic side.

Belongs to the quiver family.

The protein localises to the vesicle. The protein resides in the membrane. Its subcellular location is the endomembrane system. Required for septate junction assembly, possibly by organizing the preassembly and transport of septate junction proteins including dlg1/disks large 1 and Nrx-IV/Neurexin-IV. Involved in paracellular barrier functions of trachea, hindgut and salivary gland mediated by epithelial cell septate junctions. The chain is UPAR/Ly6 domain-containing protein crok from Drosophila melanogaster (Fruit fly).